A 379-amino-acid polypeptide reads, in one-letter code: Glucose-1-phosphate adenylyltransferase (379 aa).

Alpha-D-glucose 1-phosphate contacts are provided by residues Gly-164, 179–180 (EK), and Ser-190.

It belongs to the bacterial/plant glucose-1-phosphate adenylyltransferase family. Homotetramer.

It carries out the reaction alpha-D-glucose 1-phosphate + ATP + H(+) = ADP-alpha-D-glucose + diphosphate. It participates in glycan biosynthesis; glycogen biosynthesis. In terms of biological role, involved in the biosynthesis of ADP-glucose, a building block required for the elongation reactions to produce glycogen. Catalyzes the reaction between ATP and alpha-D-glucose 1-phosphate (G1P) to produce pyrophosphate and ADP-Glc. The polypeptide is Glucose-1-phosphate adenylyltransferase (Streptococcus uberis (strain ATCC BAA-854 / 0140J)).